The chain runs to 272 residues: Phosphatidylglycerol--prolipoprotein diacylglyceryl transferase (272 aa).

7 helical membrane passes run 17-37 (LQVH…WGLA), 55-75 (LVFY…VLFY), 90-110 (VWTG…AMLF), 125-145 (FIAP…FIGG), 174-194 (PSQI…LWWF), 202-222 (MAVS…MEFF), and 230-250 (GFIL…MLLI). R138 contributes to the a 1,2-diacyl-sn-glycero-3-phospho-(1'-sn-glycerol) binding site.

The protein belongs to the Lgt family.

Its subcellular location is the cell inner membrane. The catalysed reaction is L-cysteinyl-[prolipoprotein] + a 1,2-diacyl-sn-glycero-3-phospho-(1'-sn-glycerol) = an S-1,2-diacyl-sn-glyceryl-L-cysteinyl-[prolipoprotein] + sn-glycerol 1-phosphate + H(+). Its pathway is protein modification; lipoprotein biosynthesis (diacylglyceryl transfer). Functionally, catalyzes the transfer of the diacylglyceryl group from phosphatidylglycerol to the sulfhydryl group of the N-terminal cysteine of a prolipoprotein, the first step in the formation of mature lipoproteins. The chain is Phosphatidylglycerol--prolipoprotein diacylglyceryl transferase from Acinetobacter baumannii (strain SDF).